The primary structure comprises 800 residues: Protein gfi-3 (800 aa).

Residues glutamate 346–glutamate 366 are a coiled coil. TPR repeat units follow at residues alanine 526–glutamate 559 and isoleucine 637–threonine 670.

As to quaternary structure, the APC/C complex is probably composed of at least 12 subunits: apc-2, apc-10, apc-11, cdc-26, emb-1, emb-27, emb-30, mat-1, mat-2, mat-3, such-1 and gfi-3. Expressed in gut cells and mature sperm stored in the spermatheca.

It functions in the pathway protein modification; protein ubiquitination. In terms of biological role, probable component of the anaphase promoting complex/cyclosome (APC/C), a cell cycle-regulated E3 ubiquitin ligase that controls progression through mitosis and the G1 phase of the cell cycle. The APC/C complex acts by mediating ubiquitination and subsequent degradation of target proteins. Required for the metaphase to anaphase transition in meiosis. The polypeptide is Protein gfi-3 (Caenorhabditis elegans).